The primary structure comprises 96 residues: Aspartyl/glutamyl-tRNA(Asn/Gln) amidotransferase subunit C (96 aa).

Belongs to the GatC family. Heterotrimer of A, B and C subunits.

It catalyses the reaction L-glutamyl-tRNA(Gln) + L-glutamine + ATP + H2O = L-glutaminyl-tRNA(Gln) + L-glutamate + ADP + phosphate + H(+). It carries out the reaction L-aspartyl-tRNA(Asn) + L-glutamine + ATP + H2O = L-asparaginyl-tRNA(Asn) + L-glutamate + ADP + phosphate + 2 H(+). Allows the formation of correctly charged Asn-tRNA(Asn) or Gln-tRNA(Gln) through the transamidation of misacylated Asp-tRNA(Asn) or Glu-tRNA(Gln) in organisms which lack either or both of asparaginyl-tRNA or glutaminyl-tRNA synthetases. The reaction takes place in the presence of glutamine and ATP through an activated phospho-Asp-tRNA(Asn) or phospho-Glu-tRNA(Gln). This chain is Aspartyl/glutamyl-tRNA(Asn/Gln) amidotransferase subunit C, found in Exiguobacterium sibiricum (strain DSM 17290 / CCUG 55495 / CIP 109462 / JCM 13490 / 255-15).